The primary structure comprises 189 residues: GTP cyclohydrolase 1 (189 aa).

Zn(2+)-binding residues include cysteine 79, histidine 82, and cysteine 151.

The protein belongs to the GTP cyclohydrolase I family. As to quaternary structure, toroid-shaped homodecamer, composed of two pentamers of five dimers.

It catalyses the reaction GTP + H2O = 7,8-dihydroneopterin 3'-triphosphate + formate + H(+). It participates in cofactor biosynthesis; 7,8-dihydroneopterin triphosphate biosynthesis; 7,8-dihydroneopterin triphosphate from GTP: step 1/1. The protein is GTP cyclohydrolase 1 of Lactiplantibacillus plantarum (strain ATCC BAA-793 / NCIMB 8826 / WCFS1) (Lactobacillus plantarum).